Reading from the N-terminus, the 434-residue chain is Ribosomal protein uS12 methylthiotransferase RimO (434 aa).

Positions 1-107 (MHLGCEKNLV…ILNVLQRIEQ (107 aa)) constitute an MTTase N-terminal domain. Residues Cys5, Cys41, Cys70, Cys145, Cys149, and Cys152 each coordinate [4Fe-4S] cluster. Positions 131 to 360 (TTGKAVAYLK…ISIQQPIAEL (230 aa)) constitute a Radical SAM core domain. Residues 363–434 (QNWIGRTVDV…DLYDLTGQVV (72 aa)) form the TRAM domain.

Belongs to the methylthiotransferase family. RimO subfamily. It depends on [4Fe-4S] cluster as a cofactor.

It localises to the cytoplasm. The enzyme catalyses L-aspartate(89)-[ribosomal protein uS12]-hydrogen + (sulfur carrier)-SH + AH2 + 2 S-adenosyl-L-methionine = 3-methylsulfanyl-L-aspartate(89)-[ribosomal protein uS12]-hydrogen + (sulfur carrier)-H + 5'-deoxyadenosine + L-methionine + A + S-adenosyl-L-homocysteine + 2 H(+). In terms of biological role, catalyzes the methylthiolation of an aspartic acid residue of ribosomal protein uS12. This is Ribosomal protein uS12 methylthiotransferase RimO from Prochlorococcus marinus (strain SARG / CCMP1375 / SS120).